Here is a 1345-residue protein sequence, read N- to C-terminus: Vascular endothelial growth factor receptor 2 (1345 aa).

The N-terminal stretch at 1 to 19 (MESKALLAVALWFCVETRA) is a signal peptide. Topologically, residues 20-762 (ASVGLPGDFL…EGAQEKTNLE (743 aa)) are extracellular. Residues Asn-46, Asn-98, Asn-145, Asn-160, and Asn-247 are each glycosylated (N-linked (GlcNAc...) asparagine). 7 Ig-like C2-type domains span residues 46–111 (NTTL…RDVD), 143–209 (NKNK…INDE), 226–325 (YDVI…TFVR), 330–416 (PFIA…HMVS), 423–542 (PQIG…RVIS), 549–656 (PEIT…LVKQ), and 665–751 (PMIT…TLFI). Cys-53 and Cys-105 are joined by a disulfide. Cys-152 and Cys-202 form a disulfide bridge. A disulfide bridge connects residues Cys-248 and Cys-309. N-linked (GlcNAc...) asparagine glycans are attached at residues Asn-320, Asn-376, Asn-397, Asn-509, Asn-521, Asn-578, Asn-611, Asn-617, Asn-629, Asn-673, Asn-702, and Asn-719. 2 cysteine pairs are disulfide-bonded: Cys-447-Cys-528 and Cys-569-Cys-640. Residues Cys-686 and Cys-735 are joined by a disulfide bond. The chain crosses the membrane as a helical span at residues 763–783 (VIILVGTAVIAMFFWLLLVIV). The Cytoplasmic portion of the chain corresponds to 784-1345 (LRTVKRANEG…SGTTLRSPPV (562 aa)). A Phosphotyrosine modification is found at Tyr-799. Positions 832 to 1160 (LKLGKPLGRG…FSELVEHLGN (329 aa)) constitute a Protein kinase domain. ATP-binding positions include 838 to 846 (LGRGAFGQV) and Lys-866. Tyr-949 is subject to Phosphotyrosine; by autocatalysis. Ser-980 and Ser-982 each carry phosphoserine. Residue Tyr-994 is modified to Phosphotyrosine; by autocatalysis. An intrachain disulfide couples Cys-1022 to Cys-1043. Asp-1026 functions as the Proton acceptor in the catalytic mechanism. 4 positions are modified to phosphotyrosine; by autocatalysis: Tyr-1052, Tyr-1057, Tyr-1173, and Tyr-1212. Phosphoserine is present on residues Ser-1229 and Ser-1233. Thr-1236 bears the Phosphothreonine mark. The tract at residues 1272 to 1316 (DRNKLSPSFGGMMPSKSRESVASEGSNQTSGYQSGYHSDDTDTTV) is disordered. A compositionally biased stretch (polar residues) spans 1294–1307 (SEGSNQTSGYQSGY). 3 positions are modified to phosphotyrosine; by autocatalysis: Tyr-1303, Tyr-1307, and Tyr-1317.

It belongs to the protein kinase superfamily. Tyr protein kinase family. CSF-1/PDGF receptor subfamily. In terms of assembly, homodimer in the presence of bound dimeric VEGFA, VEGFC or VEGFD ligands; monomeric in the absence of bound ligands. Can also form heterodimers with FLT1/VEGFR1 and KDR/VEGFR2. Interacts (tyrosine phosphorylated) with LFYN, NCK1, PLCG1. Interacts (tyrosine-phosphorylated active form preferentially) with DAB2IP (via C2 domain and active form preferentially); the interaction occurs at the late phase of VEGFA response and inhibits KDR/VEGFR2 activity. Interacts with SHBSH2D2A/TSAD, GRB2, MYOF, CBL and PDCD6. Interacts (via C-terminus domain) with ERN1 (via kinase domain); the interaction is facilitated in a XBP1 isoform 1- and vascular endothelial growth factor (VEGF)-dependent manner in endothelial cells. Interacts (via juxtamembrane region) with chaperone PDCL3 (via thioredoxin fold region); the interaction leads to increased KDR/VEGFR2 abundance through inhibition of its ubiquitination and degradation. Interacts (tyrosine phosphorylated) with CCDC88A/GIV (via SH2-like region); binding requires autophosphorylation of the KDR/VEGFR2 C-terminal region. Interacts with isoform 2 of BSG. Interacts with SLC31A1; this interaction is induced upon VEGFA stimulation leading to SLC31A1 and KDR subsequent co-internalization to early endosomes, thereby activating KDR downstream signaling in endothelial cells. In terms of processing, N-glycosylated. Ubiquitinated. Tyrosine phosphorylation of the receptor promotes its poly-ubiquitination, leading to its degradation via the proteasome or lysosomal proteases. Post-translationally, autophosphorylated on tyrosine residues upon ligand binding. Autophosphorylation occurs in trans, i.e. one subunit of the dimeric receptor phosphorylates tyrosine residues on the other subunit. Phosphorylation at Tyr-949 is important for interaction with SH2D2A/TSAD and VEGFA-mediated reorganization of the actin cytoskeleton. Phosphorylation at Tyr-1173 is important for interaction with PLCG1 and SHB. Phosphorylation at Tyr-1212 is important for interaction with NCK1 and FYN. Dephosphorylated by PTPRJ at Tyr-799, Tyr-949, Tyr-994, Tyr-1052, Tyr-1057, Tyr-1173 and Tyr-1212. In terms of processing, the inhibitory disulfide bond between Cys-1022 and Cys-1043 may serve as a specific molecular switch for H(2)S-induced modification that regulates KDR/VEGFR2 function. Expressed in endothelial cells (at protein level). Detected in embryonic endothelial cells, as well as hematopoietic stem and progenitor cells. Detected in vascular endothelium. Expressed at high levels in adult heart, lung, kidney, brain and skeletal muscle, but is also expressed at lower levels in most other adult tissues.

Its subcellular location is the cell junction. The protein resides in the endoplasmic reticulum. It localises to the cell membrane. The protein localises to the cytoplasm. It is found in the nucleus. Its subcellular location is the cytoplasmic vesicle. The protein resides in the early endosome. It localises to the secreted. It catalyses the reaction L-tyrosyl-[protein] + ATP = O-phospho-L-tyrosyl-[protein] + ADP + H(+). Present in an inactive conformation in the absence of bound ligand. Binding of VEGFA, VEGFC or VEGFD leads to dimerization and activation by autophosphorylation on tyrosine residues. May be regulated by hydrogen sulfide (H(2)S) levels via a sensitive intracellular disulfide bond. Its function is as follows. Tyrosine-protein kinase that acts as a cell-surface receptor for VEGFA, VEGFC and VEGFD. Plays an essential role in the regulation of angiogenesis, vascular development, vascular permeability, and embryonic hematopoiesis. Promotes proliferation, survival, migration and differentiation of endothelial cells. Promotes reorganization of the actin cytoskeleton. Isoforms lacking a transmembrane domain, such as isoform 2, may function as decoy receptors for VEGFA, VEGFC and/or VEGFD. Isoform 2 plays an important role as a negative regulator of VEGFA- and VEGFC-mediated lymphangiogenesis by limiting the amount of free VEGFA and/or VEGFC and by preventing their binding to FLT4. Modulates FLT1 and FLT4 signaling by forming heterodimers. Binding of vascular growth factors to isoform 1 leads to the activation of several signaling cascades. Activation of PLCG1 leads to the production of the cellular signaling molecules diacylglycerol and inositol 1,4,5-trisphosphate and the activation of protein kinase C. Mediates activation of MAPK1/ERK2, MAPK3/ERK1 and the MAP kinase signaling pathway, as well as of the AKT1 signaling pathway. Mediates phosphorylation of PIK3R1, the regulatory subunit of phosphatidylinositol 3-kinase, reorganization of the actin cytoskeleton and activation of PTK2/FAK1. Required for VEGFA-mediated induction of NOS2 and NOS3, leading to the production of the signaling molecule nitric oxide (NO) by endothelial cells. Phosphorylates PLCG1. Promotes phosphorylation of FYN, NCK1, NOS3, PIK3R1, PTK2/FAK1 and SRC. This is Vascular endothelial growth factor receptor 2 from Mus musculus (Mouse).